Here is a 392-residue protein sequence, read N- to C-terminus: Selenide, water dikinase 1 (392 aa).

Cys31 is an active-site residue. ATP-binding positions include Lys32, 67-69, Asp87, Asp110, and 161-164; these read GMD and GGQT. Position 69 (Asp69) interacts with Mg(2+). Asp110 is a binding site for Mg(2+). Mg(2+) is bound at residue Asp265.

Belongs to the selenophosphate synthase 1 family. Class II subfamily. As to quaternary structure, homodimer. The cofactor is Mg(2+).

It localises to the cell membrane. The protein localises to the nucleus membrane. The catalysed reaction is hydrogenselenide + ATP + H2O = selenophosphate + AMP + phosphate + 2 H(+). Synthesizes selenophosphate from selenide and ATP. This chain is Selenide, water dikinase 1 (sephs1), found in Xenopus tropicalis (Western clawed frog).